A 398-amino-acid polypeptide reads, in one-letter code: 1-deoxy-D-xylulose 5-phosphate reductoisomerase (398 aa).

Thr-10, Gly-11, Ser-12, Ile-13, Gly-36, Lys-37, Asn-38, and Asn-124 together coordinate NADPH. Lys-125 is a binding site for 1-deoxy-D-xylulose 5-phosphate. Glu-126 lines the NADPH pocket. Asp-150 contributes to the Mn(2+) binding site. Residues Ser-151, Glu-152, Ser-186, and His-209 each coordinate 1-deoxy-D-xylulose 5-phosphate. Glu-152 serves as a coordination point for Mn(2+). Gly-215 serves as a coordination point for NADPH. Residues Ser-222, Asn-227, Lys-228, and Glu-231 each coordinate 1-deoxy-D-xylulose 5-phosphate. Glu-231 is a Mn(2+) binding site.

This sequence belongs to the DXR family. In terms of assembly, homodimer. Mg(2+) serves as cofactor. It depends on Mn(2+) as a cofactor.

The catalysed reaction is 2-C-methyl-D-erythritol 4-phosphate + NADP(+) = 1-deoxy-D-xylulose 5-phosphate + NADPH + H(+). The protein operates within isoprenoid biosynthesis; isopentenyl diphosphate biosynthesis via DXP pathway; isopentenyl diphosphate from 1-deoxy-D-xylulose 5-phosphate: step 1/6. Functionally, catalyzes the NADPH-dependent rearrangement and reduction of 1-deoxy-D-xylulose-5-phosphate (DXP) to 2-C-methyl-D-erythritol 4-phosphate (MEP). This is 1-deoxy-D-xylulose 5-phosphate reductoisomerase from Escherichia coli O157:H7.